Consider the following 423-residue polypeptide: Polyglutamylase complex subunit TTLL1 (423 aa).

One can recognise a TTL domain in the interval 1 to 367 (MAGKVKWVTD…NGEIPDCKWN (367 aa)). Residues K138, 144-145 (QG), 181-184 (SLYI), and 194-196 (KFD) contribute to the ATP site. Q144 is an a protein binding site. R220 lines the L-glutamate pocket. 241-242 (TN) provides a ligand contact to ATP. K259 provides a ligand contact to L-glutamate. Mg(2+) contacts are provided by D313, E326, and N328. Position 344 (K344) interacts with L-glutamate. The interval 391–423 (GAERELRSRPGQSLGPKGSRLRDAGRTVLTTWK) is disordered.

It belongs to the tubulin polyglutamylase family. Part of the neuronal tubulin polyglutamylase complex which contains TPGS1, TPGS2, TTLL1, LRRC49 and NICN1. Interacts with PCM1, CSTPP1 and LRRC49. The cofactor is Mg(2+).

It localises to the cytoplasm. Its subcellular location is the cytoskeleton. The protein localises to the cilium basal body. The protein resides in the cilium axoneme. It is found in the cell projection. It localises to the cilium. Its subcellular location is the flagellum. The catalysed reaction is (L-glutamyl)(n)-gamma-L-glutamyl-L-glutamyl-[protein] + L-glutamate + ATP = (L-glutamyl)(n+1)-gamma-L-glutamyl-L-glutamyl-[protein] + ADP + phosphate + H(+). In terms of biological role, catalytic subunit of a polyglutamylase complex which modifies tubulin, generating side chains of glutamate on the gamma-carboxyl group of specific glutamate residues within the C-terminal tail of tubulin. Probably involved in the side-chain elongation step of the polyglutamylation reaction rather than the initiation step. Modifies both alpha- and beta-tubulins with a preference for the alpha-tail. Unlike most polyglutamylases of the tubulin--tyrosine ligase family, only displays a catalytic activity when in complex with other proteins as it is most likely lacking domains important for autonomous activity. Part of the neuronal tubulin polyglutamylase complex. Mediates cilia and flagella polyglutamylation which is essential for their biogenesis and motility. Involved in respiratory motile cilia function through the regulation of beating asymmetry. Essential for sperm flagella biogenesis, motility and male fertility. Involved in KLF4 glutamylation which impedes its ubiquitination, thereby leading to somatic cell reprogramming, pluripotency maintenance and embryogenesis. The sequence is that of Polyglutamylase complex subunit TTLL1 (TTLL1) from Bos taurus (Bovine).